A 157-amino-acid chain; its full sequence is Nicotinate dehydrogenase small FeS subunit (157 aa).

The 2Fe-2S ferredoxin-type domain maps to 4–80; that stretch reads ITINLNLNGE…ESTIITLEGV (77 aa). Cys42, Cys47, Cys50, Cys62, Cys101, Cys104, Cys136, and Cys138 together coordinate [2Fe-2S] cluster.

Heterooctamer of NDHM, NDHL, NDHS and NDHF. Dimer of heterotetramers. Requires [2Fe-2S] cluster as cofactor.

It catalyses the reaction nicotinate + NADP(+) + H2O = 6-hydroxynicotinate + NADPH + H(+). Its pathway is cofactor degradation; nicotinate degradation; 6-hydroxynicotinate from nicotinate: step 1/1. Its activity is regulated as follows. Reversibly inactivated by selenide and sulfide. Not inhibited by cyanide. Functionally, catalyzes the hydroxylation of nicotinate to 6-hydroxynicotinate. Also active against 2-pyrazinecarboxylic acid, but inactive against other nicotinate analogs. The sequence is that of Nicotinate dehydrogenase small FeS subunit (ndhS) from Eubacterium barkeri (Clostridium barkeri).